We begin with the raw amino-acid sequence, 235 residues long: NAD-dependent protein deacylase (235 aa).

The region spanning 1–235 (MDLRLFKNIV…VPRFITQFLE (235 aa)) is the Deacetylase sirtuin-type domain. 14-33 (GAGISAESGIRTFRDQDGLW) lines the NAD(+) pocket. Y58 and R61 together coordinate substrate. NAD(+) is bound at residue 95–98 (QNVD). H113 (proton acceptor) is an active-site residue. Positions 121, 124, 140, and 143 each coordinate Zn(2+). Residues 180 to 182 (GTS), 204 to 206 (NLK), and A222 each bind NAD(+).

This sequence belongs to the sirtuin family. Class III subfamily. It depends on Zn(2+) as a cofactor.

Its subcellular location is the cytoplasm. The enzyme catalyses N(6)-acetyl-L-lysyl-[protein] + NAD(+) + H2O = 2''-O-acetyl-ADP-D-ribose + nicotinamide + L-lysyl-[protein]. It catalyses the reaction N(6)-succinyl-L-lysyl-[protein] + NAD(+) + H2O = 2''-O-succinyl-ADP-D-ribose + nicotinamide + L-lysyl-[protein]. Functionally, NAD-dependent lysine deacetylase and desuccinylase that specifically removes acetyl and succinyl groups on target proteins. Modulates the activities of several proteins which are inactive in their acylated form. This chain is NAD-dependent protein deacylase, found in Bdellovibrio bacteriovorus (strain ATCC 15356 / DSM 50701 / NCIMB 9529 / HD100).